A 176-amino-acid chain; its full sequence is ATP synthase subunit b (176 aa).

Residues 18–38 (FGLDATVWVSIAMLVFLGILV) form a helical membrane-spanning segment.

It belongs to the ATPase B chain family. As to quaternary structure, F-type ATPases have 2 components, F(1) - the catalytic core - and F(0) - the membrane proton channel. F(1) has five subunits: alpha(3), beta(3), gamma(1), delta(1), epsilon(1). F(0) has three main subunits: a(1), b(2) and c(10-14). The alpha and beta chains form an alternating ring which encloses part of the gamma chain. F(1) is attached to F(0) by a central stalk formed by the gamma and epsilon chains, while a peripheral stalk is formed by the delta and b chains.

The protein resides in the cell inner membrane. In terms of biological role, f(1)F(0) ATP synthase produces ATP from ADP in the presence of a proton or sodium gradient. F-type ATPases consist of two structural domains, F(1) containing the extramembraneous catalytic core and F(0) containing the membrane proton channel, linked together by a central stalk and a peripheral stalk. During catalysis, ATP synthesis in the catalytic domain of F(1) is coupled via a rotary mechanism of the central stalk subunits to proton translocation. Its function is as follows. Component of the F(0) channel, it forms part of the peripheral stalk, linking F(1) to F(0). In Sphingopyxis alaskensis (strain DSM 13593 / LMG 18877 / RB2256) (Sphingomonas alaskensis), this protein is ATP synthase subunit b.